Here is a 172-residue protein sequence, read N- to C-terminus: 3-hydroxydecanoyl-[acyl-carrier-protein] dehydratase (172 aa).

The active site involves histidine 71.

Belongs to the thioester dehydratase family. FabA subfamily. As to quaternary structure, homodimer.

It localises to the cytoplasm. It carries out the reaction a (3R)-hydroxyacyl-[ACP] = a (2E)-enoyl-[ACP] + H2O. The enzyme catalyses (3R)-hydroxydecanoyl-[ACP] = (2E)-decenoyl-[ACP] + H2O. It catalyses the reaction (2E)-decenoyl-[ACP] = (3Z)-decenoyl-[ACP]. The protein operates within lipid metabolism; fatty acid biosynthesis. Necessary for the introduction of cis unsaturation into fatty acids. Catalyzes the dehydration of (3R)-3-hydroxydecanoyl-ACP to E-(2)-decenoyl-ACP and then its isomerization to Z-(3)-decenoyl-ACP. Can catalyze the dehydratase reaction for beta-hydroxyacyl-ACPs with saturated chain lengths up to 16:0, being most active on intermediate chain length. The chain is 3-hydroxydecanoyl-[acyl-carrier-protein] dehydratase from Yersinia enterocolitica serotype O:8 / biotype 1B (strain NCTC 13174 / 8081).